Here is a 101-residue protein sequence, read N- to C-terminus: MAKLALIEREKKRARLVAKFAAKRDALKAIVEDQSKSEEERYEARLELQQLPRNANPTRQRNRCAITGRPRGTFRKFGLARNKIREIAFRGEIPGLTKASW.

It belongs to the universal ribosomal protein uS14 family. Part of the 30S ribosomal subunit. Contacts proteins S3 and S10.

Binds 16S rRNA, required for the assembly of 30S particles and may also be responsible for determining the conformation of the 16S rRNA at the A site. This Burkholderia lata (strain ATCC 17760 / DSM 23089 / LMG 22485 / NCIMB 9086 / R18194 / 383) protein is Small ribosomal subunit protein uS14.